A 227-amino-acid polypeptide reads, in one-letter code: MKVSYHGHSVVKIETNGKVILIDPFLTGNPKTDLKAEDVKVDAILLSHGHGDHVGDTVELAKKNNAVVVAPFELATFLSWQGVNTHPMHIGGSHEFDFGKVKFTQAFHGSSYIDEENKTITYTGMPAGILVTAEEKTLYHAGDTALFSDMKLIGELNNIDVAFLPIGDNFTMGPEDAVLAAKWVQAKTVVPMHYNTFPVIEQDPYQFVEKLQNCTGKVLEAGESITL.

This sequence belongs to the UPF0173 family.

This chain is UPF0173 metal-dependent hydrolase BT9727_4343, found in Bacillus thuringiensis subsp. konkukian (strain 97-27).